A 340-amino-acid chain; its full sequence is Putative D-lactate dehydrogenase (340 aa).

NAD(+)-binding positions include N153–I154, D174, T206–P207, V233–R235, and D259. Residue R235 is part of the active site. Residue E264 is part of the active site. H296 (proton donor) is an active-site residue.

The protein belongs to the D-isomer specific 2-hydroxyacid dehydrogenase family.

It carries out the reaction (R)-lactate + NAD(+) = pyruvate + NADH + H(+). In Dictyostelium discoideum (Social amoeba), this protein is Putative D-lactate dehydrogenase (ldhA).